An 80-amino-acid chain; its full sequence is uncharacterized protein (80 aa).

This is an uncharacterized protein from Schizosaccharomyces pombe (strain 972 / ATCC 24843) (Fission yeast).